The sequence spans 329 residues: uncharacterized protein (329 aa).

The N-terminal stretch at 1–22 is a signal peptide; sequence MPLCNNFSGNLVVAVALFFAGA.

This is an uncharacterized protein from Arabidopsis thaliana (Mouse-ear cress).